The following is a 167-amino-acid chain: NADH-quinone oxidoreductase subunit B 2 (167 aa).

[4Fe-4S] cluster is bound by residues cysteine 38, cysteine 39, cysteine 103, and cysteine 132.

This sequence belongs to the complex I 20 kDa subunit family. In terms of assembly, NDH-1 is composed of 14 different subunits. Subunits NuoB, C, D, E, F, and G constitute the peripheral sector of the complex. The cofactor is [4Fe-4S] cluster.

It is found in the cell inner membrane. It carries out the reaction a quinone + NADH + 5 H(+)(in) = a quinol + NAD(+) + 4 H(+)(out). Its function is as follows. NDH-1 shuttles electrons from NADH, via FMN and iron-sulfur (Fe-S) centers, to quinones in the respiratory chain. The immediate electron acceptor for the enzyme in this species is believed to be ubiquinone. Couples the redox reaction to proton translocation (for every two electrons transferred, four hydrogen ions are translocated across the cytoplasmic membrane), and thus conserves the redox energy in a proton gradient. In Rhizobium meliloti (strain 1021) (Ensifer meliloti), this protein is NADH-quinone oxidoreductase subunit B 2.